A 474-amino-acid chain; its full sequence is MSKKLHIKTWGCQMNEYDSSKMADLLDDYQGYTLTEDASEADVLLLNTCSIREKAQEKVFHQLGRWKSLKDKNPNLIIGVGGCVASQEGKAIKDRAQCVDIIFGPQTLHRLPEMIEQIQRGEKAVIDISFPEIEKFDRLPEPRADGPTAFVSIMEGCSKYCSFCVVPYTRGEEVSRPLDDVILEVAQLAAQGVREVNLLGQNVNAYRGATHDDEICTFAELLRLVASIDGIDRLRFTTSHPIEFTQDIIDVYEDTPELVSFLHLPVQSGSDRILTQMKRGHMAIEYKSIIRRLRKARPDIQISSDFIIGFPGESKDDFADTMKLIEDVAFDHSFSFIYSARPGTPAADLPDDVSDEEKKQRLAILQDRITQQAMRYSRQMLGTVQRILVEGPSVKNPMELRGRTENSRVVNFEAAHTHIGSFVDVKIVDVYTNSLRGEFVRGENEMDLRRSLRPAEILAKHKQDDALGVTHFKP.

The MTTase N-terminal domain maps to 3 to 120; the sequence is KKLHIKTWGC…LPEMIEQIQR (118 aa). [4Fe-4S] cluster contacts are provided by Cys12, Cys49, Cys83, Cys157, Cys161, and Cys164. Residues 143 to 375 enclose the Radical SAM core domain; sequence RADGPTAFVS…QDRITQQAMR (233 aa). One can recognise a TRAM domain in the interval 378 to 441; that stretch reads RQMLGTVQRI…TNSLRGEFVR (64 aa).

This sequence belongs to the methylthiotransferase family. MiaB subfamily. In terms of assembly, monomer. [4Fe-4S] cluster is required as a cofactor.

It localises to the cytoplasm. The enzyme catalyses N(6)-dimethylallyladenosine(37) in tRNA + (sulfur carrier)-SH + AH2 + 2 S-adenosyl-L-methionine = 2-methylsulfanyl-N(6)-dimethylallyladenosine(37) in tRNA + (sulfur carrier)-H + 5'-deoxyadenosine + L-methionine + A + S-adenosyl-L-homocysteine + 2 H(+). Functionally, catalyzes the methylthiolation of N6-(dimethylallyl)adenosine (i(6)A), leading to the formation of 2-methylthio-N6-(dimethylallyl)adenosine (ms(2)i(6)A) at position 37 in tRNAs that read codons beginning with uridine. The polypeptide is tRNA-2-methylthio-N(6)-dimethylallyladenosine synthase (Shewanella frigidimarina (strain NCIMB 400)).